Reading from the N-terminus, the 343-residue chain is GTPase Obg (343 aa).

The 159-residue stretch at 1–159 (MKFLDQAKIY…RWVWLRLKLI (159 aa)) folds into the Obg domain. Residues 160 to 328 (ADAGLVGLPN…LLRQVMTYVA (169 aa)) enclose the OBG-type G domain. Residues 166 to 173 (GLPNAGKS), 191 to 195 (FTTLH), 213 to 216 (DIPG), 280 to 283 (NKCD), and 309 to 311 (SGV) each bind GTP. Mg(2+) contacts are provided by Ser173 and Thr193.

It belongs to the TRAFAC class OBG-HflX-like GTPase superfamily. OBG GTPase family. Monomer. It depends on Mg(2+) as a cofactor.

It localises to the cytoplasm. In terms of biological role, an essential GTPase which binds GTP, GDP and possibly (p)ppGpp with moderate affinity, with high nucleotide exchange rates and a fairly low GTP hydrolysis rate. Plays a role in control of the cell cycle, stress response, ribosome biogenesis and in those bacteria that undergo differentiation, in morphogenesis control. This chain is GTPase Obg, found in Granulibacter bethesdensis (strain ATCC BAA-1260 / CGDNIH1).